Reading from the N-terminus, the 913-residue chain is Isoleucine--tRNA ligase (913 aa).

Positions 57-67 match the 'HIGH' region motif; sequence PYANGDIHLGT. L-isoleucyl-5'-AMP is bound at residue E549. A 'KMSKS' region motif is present at residues 590-594; it reads KMSKS. Residue K593 coordinates ATP. Zn(2+) contacts are provided by C881, C884, C901, and C904.

Belongs to the class-I aminoacyl-tRNA synthetase family. IleS type 1 subfamily. Monomer. Zn(2+) is required as a cofactor.

Its subcellular location is the cytoplasm. It carries out the reaction tRNA(Ile) + L-isoleucine + ATP = L-isoleucyl-tRNA(Ile) + AMP + diphosphate. Catalyzes the attachment of isoleucine to tRNA(Ile). As IleRS can inadvertently accommodate and process structurally similar amino acids such as valine, to avoid such errors it has two additional distinct tRNA(Ile)-dependent editing activities. One activity is designated as 'pretransfer' editing and involves the hydrolysis of activated Val-AMP. The other activity is designated 'posttransfer' editing and involves deacylation of mischarged Val-tRNA(Ile). The sequence is that of Isoleucine--tRNA ligase from Fervidobacterium nodosum (strain ATCC 35602 / DSM 5306 / Rt17-B1).